Here is a 348-residue protein sequence, read N- to C-terminus: Fructose-1,6-bisphosphatase (348 aa).

The short motif at 2–5 (PTLV) is the Pro/N-degron element. Ser12 carries the post-translational modification Phosphoserine. AMP-binding positions include 27-31 (IIEHQ) and 38-42 (TGDFT). Residues Asp79 and Glu108 each contribute to the Mg(2+) site. 122–123 (SY) contributes to the AMP binding site. Residues Asp128, Ile130, and Asp131 each coordinate Mg(2+). Residue 131–134 (DGSS) coordinates substrate. Arg150 lines the AMP pocket. Substrate is bound by residues 222–225 (NEGN), 255–260 (RYVGSM), Tyr276, and 286–288 (KLR). Glu292 contributes to the Mg(2+) binding site.

It belongs to the FBPase class 1 family. As to quaternary structure, homotetramer. It depends on Mg(2+) as a cofactor. In terms of processing, ubiquitinated. Targeted for proteasomal degradation when cells are shifted to glucose-containing growth medium.

It catalyses the reaction beta-D-fructose 1,6-bisphosphate + H2O = beta-D-fructose 6-phosphate + phosphate. Its pathway is carbohydrate biosynthesis; gluconeogenesis. Its activity is regulated as follows. Subject to complex allosteric regulation. The enzyme can assume an active R-state, or an inactive T-state. Intermediate conformations may exist. AMP acts as allosteric inhibitor. AMP binding affects the turnover of bound substrate and not the affinity for substrate. This chain is Fructose-1,6-bisphosphatase (FBP1), found in Saccharomyces cerevisiae (strain ATCC 204508 / S288c) (Baker's yeast).